Here is a 351-residue protein sequence, read N- to C-terminus: N-acetyl-gamma-glutamyl-phosphate reductase (351 aa).

Residue cysteine 154 is part of the active site.

Belongs to the NAGSA dehydrogenase family. Type 1 subfamily.

The protein resides in the cytoplasm. It catalyses the reaction N-acetyl-L-glutamate 5-semialdehyde + phosphate + NADP(+) = N-acetyl-L-glutamyl 5-phosphate + NADPH + H(+). It functions in the pathway amino-acid biosynthesis; L-arginine biosynthesis; N(2)-acetyl-L-ornithine from L-glutamate: step 3/4. Its function is as follows. Catalyzes the NADPH-dependent reduction of N-acetyl-5-glutamyl phosphate to yield N-acetyl-L-glutamate 5-semialdehyde. The polypeptide is N-acetyl-gamma-glutamyl-phosphate reductase (Prochlorococcus marinus (strain MIT 9515)).